The following is a 265-amino-acid chain: Hydroxyacylglutathione hydrolase (265 aa).

Zn(2+) contacts are provided by H53, H55, D57, H58, H109, D126, and H164.

The protein belongs to the metallo-beta-lactamase superfamily. Glyoxalase II family. In terms of assembly, monomer. Zn(2+) is required as a cofactor.

It carries out the reaction an S-(2-hydroxyacyl)glutathione + H2O = a 2-hydroxy carboxylate + glutathione + H(+). The protein operates within secondary metabolite metabolism; methylglyoxal degradation; (R)-lactate from methylglyoxal: step 2/2. Functionally, thiolesterase that catalyzes the hydrolysis of S-D-lactoyl-glutathione to form glutathione and D-lactic acid. In Dechloromonas aromatica (strain RCB), this protein is Hydroxyacylglutathione hydrolase.